The following is a 310-amino-acid chain: p-hydroxybenzoic acid efflux pump subunit AaeA (310 aa).

Residues 12–32 (AITVVLVILAFIAIFNAWVYY) traverse the membrane as a helical segment.

This sequence belongs to the membrane fusion protein (MFP) (TC 8.A.1) family.

The protein localises to the cell inner membrane. Forms an efflux pump with AaeB. The polypeptide is p-hydroxybenzoic acid efflux pump subunit AaeA (Escherichia coli O17:K52:H18 (strain UMN026 / ExPEC)).